Consider the following 588-residue polypeptide: WD repeat-containing protein DDB_G0349043 (588 aa).

Residues 1–32 are disordered; it reads MPLDNKVQLNENGKEVNNNNNNDEDLKIQDNH. The LisH domain occupies 40–72; the sequence is NRSELVRLLIQSLNSLGYDKSAEFLEKDSGISL. A CTLH domain is found at 73-129; it reads QSKEINQFSECVVSGDWNKVEELLPFLKLNEFDTNNVKFLVYSQKFLEYLENHKIKE. WD repeat units follow at residues 244-283, 294-333, and 336-375; these read KHRD…LDQP, GHTK…LLKT, and KHSD…LTNS. Positions 376-403 are disordered; the sequence is NNNNNNHNNNNSNINGNSINGSNNNGNN. WD repeat units follow at residues 413-452, 455-494, 499-539, and 542-582; these read WACA…TPEV, METD…IVQK, KQGR…LLET, and RHSG…NSFI.

The polypeptide is WD repeat-containing protein DDB_G0349043 (Dictyostelium discoideum (Social amoeba)).